Reading from the N-terminus, the 379-residue chain is Probable pectin lyase A (379 aa).

The first 19 residues, methionine 1 to alanine 19, serve as a signal peptide directing secretion. Disulfide bonds link cysteine 82–cysteine 101 and cysteine 91–cysteine 225. Arginine 255 is a catalytic residue. An intrachain disulfide couples cysteine 322 to cysteine 330.

The protein belongs to the polysaccharide lyase 1 family.

Its subcellular location is the secreted. The enzyme catalyses Eliminative cleavage of (1-&gt;4)-alpha-D-galacturonan methyl ester to give oligosaccharides with 4-deoxy-6-O-methyl-alpha-D-galact-4-enuronosyl groups at their non-reducing ends.. In terms of biological role, pectinolytic enzymes consist of four classes of enzymes: pectin lyase, polygalacturonase, pectin methylesterase and rhamnogalacturonase. Among pectinolytic enzymes, pectin lyase is the most important in depolymerization of pectin, since it cleaves internal glycosidic bonds of highly methylated pectins. This is Probable pectin lyase A (pelA) from Aspergillus oryzae (strain ATCC 42149 / RIB 40) (Yellow koji mold).